We begin with the raw amino-acid sequence, 266 residues long: Putative zinc finger protein 034R (266 aa).

Residues 84 to 176 are disordered; that stretch reads SPTKSVDKAA…GPKRDSTQQP (93 aa). Positions 88–100 are enriched in basic and acidic residues; sequence SVDKAAQKEKKMP. Composition is skewed to polar residues over residues 105-119 and 160-176; these read KPTT…QGIL and GVSQ…TQQP. The segment at 180–192 adopts a C3H1-type zinc-finger fold; that stretch reads CKSVLKQAKCYFG.

This sequence belongs to the IIV-6 077L family.

This Aedes vexans (Inland floodwater mosquito) protein is Putative zinc finger protein 034R.